Here is a 236-residue protein sequence, read N- to C-terminus: uncharacterized protein (236 aa).

A signal peptide spans methionine 1–alanine 26.

The protein belongs to the periplasmic pilus chaperone family.

Its subcellular location is the periplasm. Functionally, part of the elfADCG-ycbUVF fimbrial operon, which promotes adhesion of bacteria to different abiotic surfaces. Could be required for the biogenesis of fimbriae. This is an uncharacterized protein from Escherichia coli (strain K12).